The following is a 398-amino-acid chain: Cell division protein FtsZ (398 aa).

Residues 21–25 (GGGGN), 108–110 (GTG), Glu139, Arg143, and Asp187 each bind GTP.

Belongs to the FtsZ family. Homodimer. Polymerizes to form a dynamic ring structure in a strictly GTP-dependent manner. Interacts directly with several other division proteins.

Its subcellular location is the cytoplasm. Its function is as follows. Essential cell division protein that forms a contractile ring structure (Z ring) at the future cell division site. The regulation of the ring assembly controls the timing and the location of cell division. One of the functions of the FtsZ ring is to recruit other cell division proteins to the septum to produce a new cell wall between the dividing cells. Binds GTP and shows GTPase activity. The polypeptide is Cell division protein FtsZ (Pseudomonas putida (strain ATCC 47054 / DSM 6125 / CFBP 8728 / NCIMB 11950 / KT2440)).